We begin with the raw amino-acid sequence, 90 residues long: Small ribosomal subunit protein uS15 (90 aa).

It belongs to the universal ribosomal protein uS15 family. In terms of assembly, part of the 30S ribosomal subunit. Forms a bridge to the 50S subunit in the 70S ribosome, contacting the 23S rRNA.

In terms of biological role, one of the primary rRNA binding proteins, it binds directly to 16S rRNA where it helps nucleate assembly of the platform of the 30S subunit by binding and bridging several RNA helices of the 16S rRNA. Forms an intersubunit bridge (bridge B4) with the 23S rRNA of the 50S subunit in the ribosome. The sequence is that of Small ribosomal subunit protein uS15 from Wolbachia sp. subsp. Drosophila simulans (strain wRi).